The sequence spans 182 residues: CDP-diacylglycerol--glycerol-3-phosphate 3-phosphatidyltransferase (182 aa).

Residues 1–12 lie on the Cytoplasmic side of the membrane; that stretch reads MRLNIPTCLTLF. The chain crosses the membrane as a helical span at residues 13–37; it reads RLIIVPFFIIVFYLPFSNASFYSAI. Over 38–60 the chain is Periplasmic; the sequence is IFILAALTDWFDGFLARKLNQTT. The helical transmembrane segment at 61–81 threads the bilayer; the sequence is CFGAFLDPVADKIIVVIGLIL. Over 82–86 the chain is Cytoplasmic; that stretch reads IIEYF. Residues 87 to 107 form a helical membrane-spanning segment; the sequence is HSFWITIPSLIMIIREIIISS. At 108-145 the chain is on the periplasmic side; the sequence is LREWMAEIGKNNLLSVSLISKLKTSIQMLAIFSLLWKE. The helical transmembrane segment at 146 to 168 threads the bilayer; it reads TYIIIIIGILSLYVSSILAFLSM. The Cytoplasmic segment spans residues 169-181; that stretch reads LKYFYIAWRDLFR.

It belongs to the CDP-alcohol phosphatidyltransferase class-I family.

Its subcellular location is the cell inner membrane. The catalysed reaction is a CDP-1,2-diacyl-sn-glycerol + sn-glycerol 3-phosphate = a 1,2-diacyl-sn-glycero-3-phospho-(1'-sn-glycero-3'-phosphate) + CMP + H(+). Its pathway is phospholipid metabolism; phosphatidylglycerol biosynthesis; phosphatidylglycerol from CDP-diacylglycerol: step 1/2. Its function is as follows. Catalyzes the conversion of cytidine diphosphate diacylglycerol (CDP-DG) and glycerol 3-phosphate into phosphatidylglycerol. Essential for the synthesis of anionic phospholipids, thereby playing a role in balancing the ratio of zwitterionic and anionic phospholipids, which is thought to be important for normal membrane function. In Wigglesworthia glossinidia brevipalpis, this protein is CDP-diacylglycerol--glycerol-3-phosphate 3-phosphatidyltransferase.